A 415-amino-acid polypeptide reads, in one-letter code: ATP-dependent Clp protease ATP-binding subunit ClpX (415 aa).

The 52-residue stretch at 1 to 52 (MAESKNNKKRCSFCGRSENEVGFLITGMNGYICDSCATQAYEITQEAMGAGK) folds into the ClpX-type ZB domain. Zn(2+) contacts are provided by Cys-11, Cys-14, Cys-33, and Cys-36. 121–128 (STGTGKTL) lines the ATP pocket.

It belongs to the ClpX chaperone family. In terms of assembly, component of the ClpX-ClpP complex. Forms a hexameric ring that, in the presence of ATP, binds to fourteen ClpP subunits assembled into a disk-like structure with a central cavity, resembling the structure of eukaryotic proteasomes.

In terms of biological role, ATP-dependent specificity component of the Clp protease. It directs the protease to specific substrates. Can perform chaperone functions in the absence of ClpP. This is ATP-dependent Clp protease ATP-binding subunit ClpX from Bacteroides fragilis (strain ATCC 25285 / DSM 2151 / CCUG 4856 / JCM 11019 / LMG 10263 / NCTC 9343 / Onslow / VPI 2553 / EN-2).